The following is a 441-amino-acid chain: tRNA-2-methylthio-N(6)-dimethylallyladenosine synthase (441 aa).

Positions 5–120 (KLLYIETFGC…LPEMVRAAEQ (116 aa)) constitute an MTTase N-terminal domain. The [4Fe-4S] cluster site is built by C14, C50, C83, C158, C162, and C165. In terms of domain architecture, Radical SAM core spans 144-374 (EGGGVTRFVT…QGLQRDMTIE (231 aa)). The TRAM domain occupies 377 to 439 (AGFVGTCQAV…PNSLLGELAV (63 aa)).

The protein belongs to the methylthiotransferase family. MiaB subfamily. Monomer. [4Fe-4S] cluster is required as a cofactor.

It localises to the cytoplasm. It carries out the reaction N(6)-dimethylallyladenosine(37) in tRNA + (sulfur carrier)-SH + AH2 + 2 S-adenosyl-L-methionine = 2-methylsulfanyl-N(6)-dimethylallyladenosine(37) in tRNA + (sulfur carrier)-H + 5'-deoxyadenosine + L-methionine + A + S-adenosyl-L-homocysteine + 2 H(+). In terms of biological role, catalyzes the methylthiolation of N6-(dimethylallyl)adenosine (i(6)A), leading to the formation of 2-methylthio-N6-(dimethylallyl)adenosine (ms(2)i(6)A) at position 37 in tRNAs that read codons beginning with uridine. The sequence is that of tRNA-2-methylthio-N(6)-dimethylallyladenosine synthase from Geobacter metallireducens (strain ATCC 53774 / DSM 7210 / GS-15).